The chain runs to 342 residues: Glycerol-3-phosphate dehydrogenase [NAD(P)+] (342 aa).

Residues tryptophan 11, arginine 33, and lysine 112 each contribute to the NADPH site. Lysine 112, glycine 147, and serine 149 together coordinate sn-glycerol 3-phosphate. Alanine 151 lines the NADPH pocket. 5 residues coordinate sn-glycerol 3-phosphate: lysine 202, aspartate 255, serine 265, arginine 266, and asparagine 267. The Proton acceptor role is filled by lysine 202. Arginine 266 is an NADPH binding site. NADPH-binding residues include valine 290 and glutamate 292.

The protein belongs to the NAD-dependent glycerol-3-phosphate dehydrogenase family.

Its subcellular location is the cytoplasm. The catalysed reaction is sn-glycerol 3-phosphate + NAD(+) = dihydroxyacetone phosphate + NADH + H(+). It carries out the reaction sn-glycerol 3-phosphate + NADP(+) = dihydroxyacetone phosphate + NADPH + H(+). It participates in membrane lipid metabolism; glycerophospholipid metabolism. Functionally, catalyzes the reduction of the glycolytic intermediate dihydroxyacetone phosphate (DHAP) to sn-glycerol 3-phosphate (G3P), the key precursor for phospholipid synthesis. This Cupriavidus metallidurans (strain ATCC 43123 / DSM 2839 / NBRC 102507 / CH34) (Ralstonia metallidurans) protein is Glycerol-3-phosphate dehydrogenase [NAD(P)+].